Here is a 164-residue protein sequence, read N- to C-terminus: Protein SprT (164 aa).

In terms of domain architecture, SprT-like spans 14–156 (QQAETFFKRP…LCRRCREILV (143 aa)). Histidine 69 provides a ligand contact to Zn(2+). The active site involves glutamate 70. Zn(2+) is bound at residue histidine 73.

It belongs to the SprT family. It depends on Zn(2+) as a cofactor.

Its subcellular location is the cytoplasm. The protein is Protein SprT of Pseudomonas entomophila (strain L48).